Consider the following 301-residue polypeptide: MADEPKPISPFKNLLAGGFGGMCLVFVGHPLDTVKVRLQTQPPSLSGQPPMYSGTLDCFRKTLMREGITGLYRGMAAPIIGVTPMFAVCFFGFGLGKKLQQKSPEDELSYPQLFTAGMLSGVFTTGIMTPGERIKCLLQIQASSGENKYSGTLDCAKKLYQEFGIRGFYKGTVLTLMRDVPASGMYFMTYEWLKNLFTPEGKSVSDLSVPRILVAGGFAGIFNWAVAIPPDVLKSRFQTAPPGKYPNGFRDVLRELIREEGVTSLYKGFNAVMIRAFPANAACFLGFEIAMKFLNWIAPNL.

An N-acetylalanine modification is found at alanine 2. Residues 2 to 12 (ADEPKPISPFK) lie on the Cytoplasmic side of the membrane. 3 Solcar repeats span residues 8 to 99 (ISPF…GKKL), 108 to 196 (LSYP…LKNL), and 207 to 293 (LSVP…AMKF). A helical membrane pass occupies residues 13–31 (NLLAGGFGGMCLVFVGHPL). The Mitochondrial matrix segment spans residues 32–73 (DTVKVRLQTQPPSLSGQPPMYSGTLDCFRKTLMREGITGLYR). Residues 74-93 (GMAAPIIGVTPMFAVCFFGF) traverse the membrane as a helical segment. Residues 94–112 (GLGKKLQQKSPEDELSYPQ) are Cytoplasmic-facing. Residues 113–131 (LFTAGMLSGVFTTGIMTPG) form a helical membrane-spanning segment. Topologically, residues 132 to 170 (ERIKCLLQIQASSGENKYSGTLDCAKKLYQEFGIRGFYK) are mitochondrial matrix. Lysine 148 and lysine 157 each carry N6-acetyllysine. Lysine 170 carries the post-translational modification N6-acetyllysine; alternate. Position 170 is an N6-succinyllysine; alternate (lysine 170). Residues 171-190 (GTVLTLMRDVPASGMYFMTY) form a helical membrane-spanning segment. Residues 191-211 (EWLKNLFTPEGKSVSDLSVPR) lie on the Cytoplasmic side of the membrane. Residues 212-230 (ILVAGGFAGIFNWAVAIPP) form a helical membrane-spanning segment. Over 231 to 267 (DVLKSRFQTAPPGKYPNGFRDVLRELIREEGVTSLYK) the chain is Mitochondrial matrix. Residues 268-287 (GFNAVMIRAFPANAACFLGF) form a helical membrane-spanning segment. Residues 288-301 (EIAMKFLNWIAPNL) are Cytoplasmic-facing.

Belongs to the mitochondrial carrier (TC 2.A.29) family. In terms of tissue distribution, widely expressed, with highest levels in the liver, intermediate levels in heart, testis and kidney and low levels in brain, including cortex, cerebellum, hippocampus and hypothalamus.

Its subcellular location is the mitochondrion inner membrane. The enzyme catalyses O-acetyl-(R)-carnitine(in) + (R)-carnitine(out) = O-acetyl-(R)-carnitine(out) + (R)-carnitine(in). It catalyses the reaction an O-acyl-(R)-carnitine(in) + (R)-carnitine(out) = an O-acyl-(R)-carnitine(out) + (R)-carnitine(in). It carries out the reaction O-propanoyl-(R)-carnitine(in) + (R)-carnitine(out) = O-propanoyl-(R)-carnitine(out) + (R)-carnitine(in). The catalysed reaction is O-hexadecanoyl-(R)-carnitine(in) + (R)-carnitine(out) = O-hexadecanoyl-(R)-carnitine(out) + (R)-carnitine(in). The enzyme catalyses O-octanoyl-(R)-carnitine(in) + (R)-carnitine(out) = O-octanoyl-(R)-carnitine(out) + (R)-carnitine(in). It catalyses the reaction (R)-carnitine(in) = (R)-carnitine(out). Mediates the electroneutral exchange of acylcarnitines (O-acyl-(R)-carnitine or L-acylcarnitine) of different acyl chain lengths (ranging from O-acetyl-(R)-carnitine to long-chain O-acyl-(R)-carnitines) with free carnitine ((R)-carnitine or L-carnitine) across the mitochondrial inner membrane, via a ping-pong mechanism. Key player in the mitochondrial oxidation pathway, it translocates the fatty acids in the form of acylcarnitines into the mitochondrial matrix, where the carnitine palmitoyltransferase 2 (CPT-2) activates them to undergo fatty acid beta-oxidation. Catalyzes the unidirectional transport (uniport) of carnitine at lower rates than the antiport (exchange). The chain is Mitochondrial carnitine/acylcarnitine carrier protein from Mus musculus (Mouse).